We begin with the raw amino-acid sequence, 156 residues long: Ribosomal RNA large subunit methyltransferase H (156 aa).

Residues L73, G104, and 123–128 each bind S-adenosyl-L-methionine; that span reads LSSLTL.

The protein belongs to the RNA methyltransferase RlmH family. In terms of assembly, homodimer.

Its subcellular location is the cytoplasm. It catalyses the reaction pseudouridine(1915) in 23S rRNA + S-adenosyl-L-methionine = N(3)-methylpseudouridine(1915) in 23S rRNA + S-adenosyl-L-homocysteine + H(+). Its function is as follows. Specifically methylates the pseudouridine at position 1915 (m3Psi1915) in 23S rRNA. This Neisseria meningitidis serogroup A / serotype 4A (strain DSM 15465 / Z2491) protein is Ribosomal RNA large subunit methyltransferase H.